The sequence spans 87 residues: UPF0175 protein AF_0597 (87 aa).

This sequence belongs to the UPF0175 family.

The chain is UPF0175 protein AF_0597 from Archaeoglobus fulgidus (strain ATCC 49558 / DSM 4304 / JCM 9628 / NBRC 100126 / VC-16).